Consider the following 334-residue polypeptide: Ketol-acid reductoisomerase (NADP(+)) (334 aa).

Residues 1 to 181 (MNRYYDKNAD…GGGRTGILET (181 aa)) enclose the KARI N-terminal Rossmann domain. NADP(+) contacts are provided by residues 24–27 (YGSQ), Arg47, Ser50, Ser52, and 82–85 (DEFQ). His107 is a catalytic residue. An NADP(+)-binding site is contributed by Gly133. The region spanning 182-323 (SFKDETETDL…ESLRSMMPWI (142 aa)) is the KARI C-terminal knotted domain. Residues Asp190, Glu194, Glu226, and Glu230 each contribute to the Mg(2+) site. Residue Ser251 participates in substrate binding.

It belongs to the ketol-acid reductoisomerase family. The cofactor is Mg(2+).

It catalyses the reaction (2R)-2,3-dihydroxy-3-methylbutanoate + NADP(+) = (2S)-2-acetolactate + NADPH + H(+). The catalysed reaction is (2R,3R)-2,3-dihydroxy-3-methylpentanoate + NADP(+) = (S)-2-ethyl-2-hydroxy-3-oxobutanoate + NADPH + H(+). Its pathway is amino-acid biosynthesis; L-isoleucine biosynthesis; L-isoleucine from 2-oxobutanoate: step 2/4. It functions in the pathway amino-acid biosynthesis; L-valine biosynthesis; L-valine from pyruvate: step 2/4. Involved in the biosynthesis of branched-chain amino acids (BCAA). Catalyzes an alkyl-migration followed by a ketol-acid reduction of (S)-2-acetolactate (S2AL) to yield (R)-2,3-dihydroxy-isovalerate. In the isomerase reaction, S2AL is rearranged via a Mg-dependent methyl migration to produce 3-hydroxy-3-methyl-2-ketobutyrate (HMKB). In the reductase reaction, this 2-ketoacid undergoes a metal-dependent reduction by NADPH to yield (R)-2,3-dihydroxy-isovalerate. This Ruthia magnifica subsp. Calyptogena magnifica protein is Ketol-acid reductoisomerase (NADP(+)).